The sequence spans 372 residues: NADH-quinone oxidoreductase subunit H (372 aa).

A run of 8 helical transmembrane segments spans residues 34-54, 106-126, 139-159, 178-198, 217-237, 269-289, 313-333, and 352-372; these read LPLGLLVIAAIPLVFIALYAL, FLFVIGPGVLFVGSFLAFAVL, VGLFYAIGIVALEVVGILAAG, IVSYEIPAAIALLCGAMMAGT, FFLFQSPIAWLPFLIYFIASL, VIFLAEYGSMFMVSAIIAIVF, VWGAFWIIMKGFFFIFVQMWL, and VLTPFAFVSFVLTAIWMIYVP.

It belongs to the complex I subunit 1 family. In terms of assembly, NDH-1 is composed of 14 different subunits. Subunits NuoA, H, J, K, L, M, N constitute the membrane sector of the complex.

Its subcellular location is the cell inner membrane. The catalysed reaction is a quinone + NADH + 5 H(+)(in) = a quinol + NAD(+) + 4 H(+)(out). In terms of biological role, NDH-1 shuttles electrons from NADH, via FMN and iron-sulfur (Fe-S) centers, to quinones in the respiratory chain. The immediate electron acceptor for the enzyme in this species is believed to be ubiquinone. Couples the redox reaction to proton translocation (for every two electrons transferred, four hydrogen ions are translocated across the cytoplasmic membrane), and thus conserves the redox energy in a proton gradient. This subunit may bind ubiquinone. The protein is NADH-quinone oxidoreductase subunit H of Chlorobium luteolum (strain DSM 273 / BCRC 81028 / 2530) (Pelodictyon luteolum).